Consider the following 115-residue polypeptide: NADH-ubiquinone oxidoreductase chain 3 (115 aa).

3 helical membrane-spanning segments follow: residues 3-23 (LMLA…IMFW), 55-75 (FFLV…LLSL), and 84-104 (LPTM…SLAY).

This sequence belongs to the complex I subunit 3 family. In terms of assembly, core subunit of respiratory chain NADH dehydrogenase (Complex I) which is composed of 45 different subunits. Interacts with TMEM186. Interacts with TMEM242.

It localises to the mitochondrion inner membrane. It carries out the reaction a ubiquinone + NADH + 5 H(+)(in) = a ubiquinol + NAD(+) + 4 H(+)(out). Its function is as follows. Core subunit of the mitochondrial membrane respiratory chain NADH dehydrogenase (Complex I) which catalyzes electron transfer from NADH through the respiratory chain, using ubiquinone as an electron acceptor. Essential for the catalytic activity of complex I. In Papio hamadryas (Hamadryas baboon), this protein is NADH-ubiquinone oxidoreductase chain 3.